A 327-amino-acid polypeptide reads, in one-letter code: GMP reductase (327 aa).

Cys176 acts as the Thioimidate intermediate in catalysis. 205–228 (IIADGGIRTHGDIAKSIRFGASMV) serves as a coordination point for NADP(+).

Belongs to the IMPDH/GMPR family. GuaC type 2 subfamily.

The catalysed reaction is IMP + NH4(+) + NADP(+) = GMP + NADPH + 2 H(+). Catalyzes the irreversible NADPH-dependent deamination of GMP to IMP. It functions in the conversion of nucleobase, nucleoside and nucleotide derivatives of G to A nucleotides, and in maintaining the intracellular balance of A and G nucleotides. The protein is GMP reductase of Streptococcus suis (strain 05ZYH33).